Consider the following 317-residue polypeptide: tRNA dimethylallyltransferase (317 aa).

14–21 is an ATP binding site; sequence GPTAVGKT. 16–21 is a substrate binding site; sequence TAVGKT. An interaction with substrate tRNA region spans residues 39-42; sequence DSMQ.

The protein belongs to the IPP transferase family. In terms of assembly, monomer. Mg(2+) serves as cofactor.

It catalyses the reaction adenosine(37) in tRNA + dimethylallyl diphosphate = N(6)-dimethylallyladenosine(37) in tRNA + diphosphate. Its function is as follows. Catalyzes the transfer of a dimethylallyl group onto the adenine at position 37 in tRNAs that read codons beginning with uridine, leading to the formation of N6-(dimethylallyl)adenosine (i(6)A). This chain is tRNA dimethylallyltransferase, found in Bacillus thuringiensis subsp. konkukian (strain 97-27).